The sequence spans 450 residues: Keratin, type I cytoskeletal 25 (450 aa).

The interval 1 to 25 (MSLRLPSGSRRASPRPTTGSLRLSS) is disordered. The segment at 1 to 78 (MSLRLPSGSR…VNEGGLLSGN (78 aa)) is head. The tract at residues 79-114 (EKVTMQNLNDRLASYLENVRALEEANADLEQKIKGW) is coil 1A. The IF rod domain maps to 79–394 (EKVTMQNLND…LLIGGDDGAC (316 aa)). The segment at 115–136 (YEKFGPGSCRGLDHDYSRYFPI) is linker 1. The interval 137–228 (IEDLKNQIIA…KNHKEEMQVL (92 aa)) is coil 1B. The tract at residues 229–251 (QCAAGGNVNVEMNAAPGVDLTVL) is linker 12. The interval 252–390 (LNNMRAEYEA…ETYCLLIGGD (139 aa)) is coil 2. Residues 391-450 (DGACKSGGYKSKDYGAGNVGNQMKDPVKAIVVKKVLEEVDQRSKILTPRLHSLEEKSQSN) form a tail region. The residue at position 442 (Ser442) is a Phosphoserine.

The protein belongs to the intermediate filament family. As to quaternary structure, heterodimer of a type I and a type II keratin. Heterodimer with type II keratin KRT5 leading to the formation of keratin intermediate filament (KIF) network. Interacts with KRT6A to form filaments.

Its subcellular location is the cytoplasm. Functionally, essential for the proper assembly of type I and type II keratin protein complexes and formation of keratin intermediate filaments in the inner root sheath (irs). Plays a role in the cytoskeleton organization. In Bos taurus (Bovine), this protein is Keratin, type I cytoskeletal 25.